The following is a 156-amino-acid chain: ATP synthase subunit b (156 aa).

A helical transmembrane segment spans residues 7–29 (LFGQTVAFILFVWFCMKFVWPPL).

It belongs to the ATPase B chain family. In terms of assembly, F-type ATPases have 2 components, F(1) - the catalytic core - and F(0) - the membrane proton channel. F(1) has five subunits: alpha(3), beta(3), gamma(1), delta(1), epsilon(1). F(0) has three main subunits: a(1), b(2) and c(10-14). The alpha and beta chains form an alternating ring which encloses part of the gamma chain. F(1) is attached to F(0) by a central stalk formed by the gamma and epsilon chains, while a peripheral stalk is formed by the delta and b chains.

It localises to the cell inner membrane. Functionally, f(1)F(0) ATP synthase produces ATP from ADP in the presence of a proton or sodium gradient. F-type ATPases consist of two structural domains, F(1) containing the extramembraneous catalytic core and F(0) containing the membrane proton channel, linked together by a central stalk and a peripheral stalk. During catalysis, ATP synthesis in the catalytic domain of F(1) is coupled via a rotary mechanism of the central stalk subunits to proton translocation. Component of the F(0) channel, it forms part of the peripheral stalk, linking F(1) to F(0). The chain is ATP synthase subunit b from Shewanella frigidimarina (strain NCIMB 400).